We begin with the raw amino-acid sequence, 91 residues long: Small ribosomal subunit protein bS18 (91 aa).

Residues Met-1–Arg-21 form a disordered region. A compositionally biased stretch (basic residues) spans Gly-12–Arg-21.

Belongs to the bacterial ribosomal protein bS18 family. As to quaternary structure, part of the 30S ribosomal subunit. Forms a tight heterodimer with protein bS6.

Binds as a heterodimer with protein bS6 to the central domain of the 16S rRNA, where it helps stabilize the platform of the 30S subunit. The polypeptide is Small ribosomal subunit protein bS18 (Geotalea daltonii (strain DSM 22248 / JCM 15807 / FRC-32) (Geobacter daltonii)).